Reading from the N-terminus, the 584-residue chain is Tricyclene synthase 1e20, chloroplastic (584 aa).

The transit peptide at Met1–Asn45 directs the protein to the chloroplast. Residues Asn30, Asn209, and Asn322 are each glycosylated (N-linked (GlcNAc...) asparagine). Residues Asp341 and Asp345 each coordinate Mg(2+). A DDXXD motif motif is present at residues Asp341 to Asp345. N-linked (GlcNAc...) asparagine glycans are attached at residues Asn387 and Asn468. Mg(2+)-binding residues include Asn485, Ser489, and Glu493. An N-linked (GlcNAc...) asparagine glycan is attached at Asn512.

This sequence belongs to the terpene synthase family. Tpsg subfamily. Requires Mg(2+) as cofactor. Mn(2+) serves as cofactor. As to expression, accumulates at low levels in flowers; mostly expressed in both upper and lower petal lobes, and, to a lower extent, in tube and stamens.

Its subcellular location is the plastid. The protein resides in the chloroplast stroma. The catalysed reaction is (2E)-geranyl diphosphate = tricyclene + diphosphate. It carries out the reaction (2E)-geranyl diphosphate = beta-myrcene + diphosphate. Its pathway is secondary metabolite biosynthesis; terpenoid biosynthesis. In terms of biological role, may contribute to floral scent emission. The chain is Tricyclene synthase 1e20, chloroplastic (1e20) from Antirrhinum majus (Garden snapdragon).